We begin with the raw amino-acid sequence, 215 residues long: Probable transaldolase (215 aa).

The active-site Schiff-base intermediate with substrate is K83.

Belongs to the transaldolase family. Type 3B subfamily.

It is found in the cytoplasm. It catalyses the reaction D-sedoheptulose 7-phosphate + D-glyceraldehyde 3-phosphate = D-erythrose 4-phosphate + beta-D-fructose 6-phosphate. Its pathway is carbohydrate degradation; pentose phosphate pathway; D-glyceraldehyde 3-phosphate and beta-D-fructose 6-phosphate from D-ribose 5-phosphate and D-xylulose 5-phosphate (non-oxidative stage): step 2/3. Transaldolase is important for the balance of metabolites in the pentose-phosphate pathway. The protein is Probable transaldolase of Desulforudis audaxviator (strain MP104C).